The primary structure comprises 202 residues: Small ribosomal subunit protein uS4 (202 aa).

The disordered stretch occupies residues 21-42; it reads LSRKSPRRAYPPGQHGQARRKR. Residues 90 to 152 enclose the S4 RNA-binding domain; the sequence is MRLDNTVFRL…DRSRKLVETN (63 aa).

Belongs to the universal ribosomal protein uS4 family. Part of the 30S ribosomal subunit. Contacts protein S5. The interaction surface between S4 and S5 is involved in control of translational fidelity.

One of the primary rRNA binding proteins, it binds directly to 16S rRNA where it nucleates assembly of the body of the 30S subunit. Its function is as follows. With S5 and S12 plays an important role in translational accuracy. The sequence is that of Small ribosomal subunit protein uS4 from Synechocystis sp. (strain ATCC 27184 / PCC 6803 / Kazusa).